The chain runs to 548 residues: C2H2-type transcription factor MSN2 (548 aa).

2 consecutive C2H2-type zinc fingers follow at residues F420–P448 and F449–H471.

Interacts with HOG1/OSM1.

The protein resides in the nucleus. Its subcellular location is the cytoplasm. Its function is as follows. Transcription factor that acts as a key downstream transcription factor in the HOG1-MAPK pathway. Regulates the expression of a series of downstream genes and controls vegetative growth, conidiogenesis, cell wall integrity, stress response, mitochondrial morphology, and pathogenicity. Binds to a putative promoter region 1500 bp upstream of the start codons of the target genes MGG_07019, POX1 and DCI1. Binds to the AGGGG and CCCCT motif of the COS1 promoter region. Involved in fatty acid beta-oxidation by directly regulating the expression of the dienoyl-CoA isomerase DCI1, thereby facilitating invasive hyphal growth during the early infection stage. Targets also the 3-methylglutaconyl-CoA hydratase-encoding gene (AUH1) to control mitochondrial morphology and mitophagy, which are critical for the infectious growth of the pathogen. In Pyricularia oryzae (strain 70-15 / ATCC MYA-4617 / FGSC 8958) (Rice blast fungus), this protein is C2H2-type transcription factor MSN2.